The primary structure comprises 857 residues: Catalase-peroxidase (857 aa).

The tryptophyl-tyrosyl-methioninium (Trp-Tyr) (with M-356) cross-link spans 207–330; that stretch reads WHSAGTYRVS…LAAVQMGLIY (124 aa). Catalysis depends on His-208, which acts as the Proton acceptor. Residues 330–356 constitute a cross-link (tryptophyl-tyrosyl-methioninium (Tyr-Met) (with W-207)); the sequence is YVNPEGPNGKPDPIAAAKDIRETFGRM. Heme b is bound at residue His-371.

Belongs to the peroxidase family. Peroxidase/catalase subfamily. Homodimer or homotetramer. It depends on heme b as a cofactor. Post-translationally, formation of the three residue Trp-Tyr-Met cross-link is important for the catalase, but not the peroxidase activity of the enzyme.

The catalysed reaction is H2O2 + AH2 = A + 2 H2O. It catalyses the reaction 2 H2O2 = O2 + 2 H2O. Functionally, bifunctional enzyme with both catalase and broad-spectrum peroxidase activity. This Rhodopirellula baltica (strain DSM 10527 / NCIMB 13988 / SH1) protein is Catalase-peroxidase.